The chain runs to 255 residues: Protein N-terminal and lysine N-methyltransferase efm7 (255 aa).

The tract at residues 1–25 (MADNDFEGFGIFEEPEGFRPSTPPP) is disordered. S-adenosyl-L-methionine is bound by residues W58, 84 to 86 (GAG), D106, W137, and S162.

This sequence belongs to the class I-like SAM-binding methyltransferase superfamily. EFM7 family.

Its subcellular location is the cytoplasm. In terms of biological role, S-adenosyl-L-methionine-dependent protein methyltransferase that trimethylates the N-terminal glycine 'Gly-2' of elongation factor 1-alpha, before also catalyzing the mono- and dimethylation of 'Lys-3'. In Schizosaccharomyces pombe (strain 972 / ATCC 24843) (Fission yeast), this protein is Protein N-terminal and lysine N-methyltransferase efm7.